The chain runs to 150 residues: Phosphoribosyl-AMP cyclohydrolase (150 aa).

Asp92 provides a ligand contact to Mg(2+). Cys93 contributes to the Zn(2+) binding site. Residues Asp94 and Asp96 each contribute to the Mg(2+) site. Zn(2+) is bound by residues Cys111 and Cys118.

The protein belongs to the PRA-CH family. Homodimer. Mg(2+) serves as cofactor. Requires Zn(2+) as cofactor.

The protein localises to the cytoplasm. The enzyme catalyses 1-(5-phospho-beta-D-ribosyl)-5'-AMP + H2O = 1-(5-phospho-beta-D-ribosyl)-5-[(5-phospho-beta-D-ribosylamino)methylideneamino]imidazole-4-carboxamide. Its pathway is amino-acid biosynthesis; L-histidine biosynthesis; L-histidine from 5-phospho-alpha-D-ribose 1-diphosphate: step 3/9. Catalyzes the hydrolysis of the adenine ring of phosphoribosyl-AMP. This chain is Phosphoribosyl-AMP cyclohydrolase, found in Agrobacterium fabrum (strain C58 / ATCC 33970) (Agrobacterium tumefaciens (strain C58)).